The following is a 324-amino-acid chain: Myoblast determination protein 1 homolog (324 aa).

Residues 125 to 146 (VDSQHEDTTTSTAGGAGVGGPR) are disordered. The bHLH domain occupies 155-206 (DRRKAATMRERRRLRKVNEAFEVVKQRTCPNPNQRLPKVEILRSAIDYINNL). The tract at residues 251–272 (YNPENMFDDDDLTDSDDDRDHH) is disordered. Positions 256–267 (MFDDDDLTDSDD) are enriched in acidic residues.

As to quaternary structure, efficient DNA binding requires dimerization with another bHLH protein. In terms of tissue distribution, body wall muscle cells; in clonal muscle precursors, in a set of early embryonic blastomeres (the ms-granddaughters), and in six glial-like cells called GLRS.

It is found in the nucleus. Involved in myogenesis, in cooperation with transcription factors unc-120 and hnd-1. Acts redundantly with fozi-1 to promote body wall muscle cell and coelomocyte specification in postembryonic mesoderm progenitors, probably through suppression of sem-2. This is Myoblast determination protein 1 homolog from Caenorhabditis elegans.